The sequence spans 305 residues: UDP-3-O-acyl-N-acetylglucosamine deacetylase (305 aa).

Zn(2+) is bound by residues His-79, His-238, and Asp-242. Catalysis depends on His-265, which acts as the Proton donor.

The protein belongs to the LpxC family. Zn(2+) is required as a cofactor.

The enzyme catalyses a UDP-3-O-[(3R)-3-hydroxyacyl]-N-acetyl-alpha-D-glucosamine + H2O = a UDP-3-O-[(3R)-3-hydroxyacyl]-alpha-D-glucosamine + acetate. It participates in glycolipid biosynthesis; lipid IV(A) biosynthesis; lipid IV(A) from (3R)-3-hydroxytetradecanoyl-[acyl-carrier-protein] and UDP-N-acetyl-alpha-D-glucosamine: step 2/6. In terms of biological role, catalyzes the hydrolysis of UDP-3-O-myristoyl-N-acetylglucosamine to form UDP-3-O-myristoylglucosamine and acetate, the committed step in lipid A biosynthesis. This chain is UDP-3-O-acyl-N-acetylglucosamine deacetylase, found in Pasteurella multocida (strain Pm70).